We begin with the raw amino-acid sequence, 450 residues long: Glutamyl-tRNA(Gln) amidotransferase subunit A, mitochondrial (450 aa).

Residues Lys47 and Ser122 each act as charge relay system in the active site. Ser146 acts as the Acyl-ester intermediate in catalysis.

This sequence belongs to the amidase family. GatA subfamily. As to quaternary structure, subunit of the heterotrimeric GatFAB amidotransferase (AdT) complex, composed of A, B and F subunits.

It is found in the mitochondrion. It catalyses the reaction L-glutamyl-tRNA(Gln) + L-glutamine + ATP + H2O = L-glutaminyl-tRNA(Gln) + L-glutamate + ADP + phosphate + H(+). Its function is as follows. Allows the formation of correctly charged Gln-tRNA(Gln) through the transamidation of misacylated Glu-tRNA(Gln) in the mitochondria. The reaction takes place in the presence of glutamine and ATP through an activated gamma-phospho-Glu-tRNA(Gln). The polypeptide is Glutamyl-tRNA(Gln) amidotransferase subunit A, mitochondrial (Candida albicans (strain WO-1) (Yeast)).